Reading from the N-terminus, the 212-residue chain is MAISDMRRQYSKGSLSESDITSSPFSLFDQWLKDAIDAGIPDPTAMTVATVDSTGQPSQRIVLLKDVSDKGFVFFTNLGSRKAQELSVNPKVSCHFPWFFMERQVRVCGSVEKLSVSENAAYFFSRPKDSQLAAYASKQSKPIGSRALLLTQFKQLKDKFANKALPVPDFWGGFRIVPHQIEFWQGGEDRLHDRLEYNKAEDGRWSTQRLMP.

Substrate contacts are provided by residues 7-10 and Lys65; that span reads RRQY. Residues 60–65, 75–76, Arg81, Lys82, and Gln104 contribute to the FMN site; these read RIVLLK and FT. Residues Tyr122, Arg126, and Ser130 each contribute to the substrate site. FMN-binding positions include 139–140 and Trp184; that span reads QS. Substrate is bound at residue 190–192; that stretch reads RLH. Arg194 provides a ligand contact to FMN.

This sequence belongs to the pyridoxamine 5'-phosphate oxidase family. As to quaternary structure, homodimer. Requires FMN as cofactor.

The catalysed reaction is pyridoxamine 5'-phosphate + O2 + H2O = pyridoxal 5'-phosphate + H2O2 + NH4(+). It carries out the reaction pyridoxine 5'-phosphate + O2 = pyridoxal 5'-phosphate + H2O2. It participates in cofactor metabolism; pyridoxal 5'-phosphate salvage; pyridoxal 5'-phosphate from pyridoxamine 5'-phosphate: step 1/1. It functions in the pathway cofactor metabolism; pyridoxal 5'-phosphate salvage; pyridoxal 5'-phosphate from pyridoxine 5'-phosphate: step 1/1. Functionally, catalyzes the oxidation of either pyridoxine 5'-phosphate (PNP) or pyridoxamine 5'-phosphate (PMP) into pyridoxal 5'-phosphate (PLP). The chain is Pyridoxine/pyridoxamine 5'-phosphate oxidase from Alteromonas mediterranea (strain DSM 17117 / CIP 110805 / LMG 28347 / Deep ecotype).